The sequence spans 143 residues: Interferon gamma (143 aa).

Position 1 is a pyrrolidone carboxylic acid (Gln-1). N-linked (GlcNAc...) asparagine glycans are attached at residues Asn-25 and Asn-97.

It belongs to the type II (or gamma) interferon family. In terms of assembly, homodimer. Interacts with IFNGR1 (via extracellular domain); this interaction promotes IFNGR1 dimerization.

It is found in the secreted. In terms of biological role, type II interferon produced by immune cells such as T-cells and NK cells that plays crucial roles in antimicrobial, antiviral, and antitumor responses by activating effector immune cells and enhancing antigen presentation. Primarily signals through the JAK-STAT pathway after interaction with its receptor IFNGR1 to affect gene regulation. Upon IFNG binding, IFNGR1 intracellular domain opens out to allow association of downstream signaling components JAK2, JAK1 and STAT1, leading to STAT1 activation, nuclear translocation and transcription of IFNG-regulated genes. Many of the induced genes are transcription factors such as IRF1 that are able to further drive regulation of a next wave of transcription. Plays a role in class I antigen presentation pathway by inducing a replacement of catalytic proteasome subunits with immunoproteasome subunits. In turn, increases the quantity, quality, and repertoire of peptides for class I MHC loading. Increases the efficiency of peptide generation also by inducing the expression of activator PA28 that associates with the proteasome and alters its proteolytic cleavage preference. Up-regulates as well MHC II complexes on the cell surface by promoting expression of several key molecules such as cathepsins B/CTSB, H/CTSH, and L/CTSL. Participates in the regulation of hematopoietic stem cells during development and under homeostatic conditions by affecting their development, quiescence, and differentiation. This is Interferon gamma (IFNG) from Pan troglodytes (Chimpanzee).